The chain runs to 140 residues: MAKTIRRYSSFRLRNRRIRSRKSARKIPKGIIHVQASFSNTIVTVTDVGGRVVTSASAGACGFKGRRRGTPFAAQTTAENAIRTVVTQGMHRAVVLVKGVGRGRDAALRAILRSGVRLHLLRDRTPLPHNGCRPPKRRRT.

This sequence belongs to the universal ribosomal protein uS11 family. As to quaternary structure, part of the 30S ribosomal subunit.

Its subcellular location is the plastid. It localises to the chloroplast. In Pelargonium hortorum (Common geranium), this protein is Small ribosomal subunit protein uS11c.